A 550-amino-acid polypeptide reads, in one-letter code: Hydroxylamine reductase (550 aa).

[2Fe-2S] cluster is bound by residues Cys-3, Cys-6, Cys-18, and Cys-25. His-249, Glu-273, Cys-317, Cys-405, Cys-433, Cys-458, Glu-492, and Lys-494 together coordinate hybrid [4Fe-2O-2S] cluster. Residue Cys-405 is modified to Cysteine persulfide.

The protein belongs to the HCP family. [2Fe-2S] cluster is required as a cofactor. It depends on hybrid [4Fe-2O-2S] cluster as a cofactor.

The protein localises to the cytoplasm. The enzyme catalyses A + NH4(+) + H2O = hydroxylamine + AH2 + H(+). Its function is as follows. Catalyzes the reduction of hydroxylamine to form NH(3) and H(2)O. This Escherichia coli O7:K1 (strain IAI39 / ExPEC) protein is Hydroxylamine reductase.